Here is a 327-residue protein sequence, read N- to C-terminus: MQQLTEIVEQALAAIEQATDLKVLDDIRVDYLGKKGQITDLMKLMGTLSAEEKPKFGQAVNDAKQSVQAKLGEQMELFKARELEAKLAAEQIDVTLPGRTLDNGGLHPVTRTIERIESFFGELGFTVKQGPEIEDDFHNFDALNISEHHPARADHDTFYFNPKVMLRTQTSGVQIRTMETEKPPLRIISPGRVYRNDYDMTHTPMFHQVEGLLVDENVNFAELKGILHDFLRNFFEEDLQVRFRPSYFPFTEPSAEVDVMGKNGKWLEVLGCGMVHPNVLRSVGIDPEKYSGFAFGMGVERLTMLRYGVNDLRAFFENDLRFLKQFK.

Glutamate 252 lines the Mg(2+) pocket.

It belongs to the class-II aminoacyl-tRNA synthetase family. Phe-tRNA synthetase alpha subunit type 1 subfamily. In terms of assembly, tetramer of two alpha and two beta subunits. The cofactor is Mg(2+).

It localises to the cytoplasm. It catalyses the reaction tRNA(Phe) + L-phenylalanine + ATP = L-phenylalanyl-tRNA(Phe) + AMP + diphosphate + H(+). This chain is Phenylalanine--tRNA ligase alpha subunit, found in Shewanella amazonensis (strain ATCC BAA-1098 / SB2B).